The chain runs to 219 residues: Transmembrane protein 125 (219 aa).

4 helical membrane passes run 36 to 56 (LCFV…VALL), 68 to 88 (LATG…QLMS), 114 to 134 (ALVV…LAGL), and 147 to 167 (MLSV…GLLL).

The protein localises to the membrane. This chain is Transmembrane protein 125 (TMEM125), found in Homo sapiens (Human).